The chain runs to 392 residues: uncharacterized protein (392 aa).

A signal peptide spans methionine 1 to glycine 19. A lipid anchor (N-palmitoyl cysteine) is attached at cysteine 20. Cysteine 20 carries S-diacylglycerol cysteine lipidation. Residues serine 148 to glutamate 173 are disordered. Residues serine 151–glycine 160 are compositionally biased toward gly residues.

The protein belongs to the TP013X lipoprotein family.

The protein resides in the cell membrane. This is an uncharacterized protein from Treponema pallidum (strain Nichols).